Here is a 590-residue protein sequence, read N- to C-terminus: Aspartate--tRNA(Asp/Asn) ligase (590 aa).

An L-aspartate-binding site is contributed by E170. The interval 194–197 is aspartate; the sequence is QLFK. L-aspartate is bound at residue R216. ATP is bound by residues 216 to 218 and Q225; that span reads RDE. H448 provides a ligand contact to L-aspartate. E482 serves as a coordination point for ATP. Residue R489 coordinates L-aspartate. 534–537 contributes to the ATP binding site; it reads GWDR. The disordered stretch occupies residues 557–590; the sequence is SGGGADPLTGAPAPITPQQRRESGIDAKPKKDGE. The segment covering 575–590 has biased composition (basic and acidic residues); sequence QRRESGIDAKPKKDGE.

Belongs to the class-II aminoacyl-tRNA synthetase family. Type 1 subfamily. As to quaternary structure, homodimer.

It is found in the cytoplasm. It catalyses the reaction tRNA(Asx) + L-aspartate + ATP = L-aspartyl-tRNA(Asx) + AMP + diphosphate. Its function is as follows. Aspartyl-tRNA synthetase with relaxed tRNA specificity since it is able to aspartylate not only its cognate tRNA(Asp) but also tRNA(Asn). Reaction proceeds in two steps: L-aspartate is first activated by ATP to form Asp-AMP and then transferred to the acceptor end of tRNA(Asp/Asn). The chain is Aspartate--tRNA(Asp/Asn) ligase from Mycobacterium sp. (strain JLS).